A 403-amino-acid polypeptide reads, in one-letter code: Bifunctional enzyme IspD/IspF (403 aa).

The tract at residues M1–I234 is 2-C-methyl-D-erythritol 4-phosphate cytidylyltransferase. Residues R235–T403 form a 2-C-methyl-D-erythritol 2,4-cyclodiphosphate synthase region. A divalent metal cation contacts are provided by D241 and H243. 4-CDP-2-C-methyl-D-erythritol 2-phosphate-binding positions include D241–H243 and H267–S268. An a divalent metal cation-binding site is contributed by H275. 4-CDP-2-C-methyl-D-erythritol 2-phosphate contacts are provided by residues D289 to G291, T365 to E368, F372, and R375.

It in the N-terminal section; belongs to the IspD/TarI cytidylyltransferase family. IspD subfamily. The protein in the C-terminal section; belongs to the IspF family. A divalent metal cation is required as a cofactor.

The enzyme catalyses 2-C-methyl-D-erythritol 4-phosphate + CTP + H(+) = 4-CDP-2-C-methyl-D-erythritol + diphosphate. It catalyses the reaction 4-CDP-2-C-methyl-D-erythritol 2-phosphate = 2-C-methyl-D-erythritol 2,4-cyclic diphosphate + CMP. It participates in isoprenoid biosynthesis; isopentenyl diphosphate biosynthesis via DXP pathway; isopentenyl diphosphate from 1-deoxy-D-xylulose 5-phosphate: step 2/6. Its pathway is isoprenoid biosynthesis; isopentenyl diphosphate biosynthesis via DXP pathway; isopentenyl diphosphate from 1-deoxy-D-xylulose 5-phosphate: step 4/6. In terms of biological role, bifunctional enzyme that catalyzes the formation of 4-diphosphocytidyl-2-C-methyl-D-erythritol from CTP and 2-C-methyl-D-erythritol 4-phosphate (MEP) (IspD), and catalyzes the conversion of 4-diphosphocytidyl-2-C-methyl-D-erythritol 2-phosphate (CDP-ME2P) to 2-C-methyl-D-erythritol 2,4-cyclodiphosphate (ME-CPP) with a corresponding release of cytidine 5-monophosphate (CMP) (IspF). The sequence is that of Bifunctional enzyme IspD/IspF from Nitrobacter hamburgensis (strain DSM 10229 / NCIMB 13809 / X14).